A 527-amino-acid chain; its full sequence is Ankyrin repeat domain-containing protein 42 (527 aa).

The tract at residues 1-27 (MPGVANPGPSKSRRETADSSSRKKVHF) is disordered. Basic and acidic residues predominate over residues 12 to 21 (SRRETADSSS). 10 ANK repeats span residues 25–54 (VHFS…NLNE), 59–88 (HQFT…DATQ), 92–121 (RGWT…NLAT), 125–154 (RGCT…DPSV), 158–187 (REWK…GIED), 191–220 (NGNL…SATQ), 228–257 (NGEN…EGSH), 263–293 (DLAF…NLNE), 297–326 (NGST…ESNI), and 330–360 (AGET…EIDD). Positions 395-484 (NARMRAHKKI…ETLQKIQVTS (90 aa)) form a coiled coil.

The polypeptide is Ankyrin repeat domain-containing protein 42 (Ankrd42) (Mus musculus (Mouse)).